The primary structure comprises 577 residues: Proline--tRNA ligase (577 aa).

It belongs to the class-II aminoacyl-tRNA synthetase family. ProS type 1 subfamily. As to quaternary structure, homodimer.

It is found in the cytoplasm. It catalyses the reaction tRNA(Pro) + L-proline + ATP = L-prolyl-tRNA(Pro) + AMP + diphosphate. Catalyzes the attachment of proline to tRNA(Pro) in a two-step reaction: proline is first activated by ATP to form Pro-AMP and then transferred to the acceptor end of tRNA(Pro). As ProRS can inadvertently accommodate and process non-cognate amino acids such as alanine and cysteine, to avoid such errors it has two additional distinct editing activities against alanine. One activity is designated as 'pretransfer' editing and involves the tRNA(Pro)-independent hydrolysis of activated Ala-AMP. The other activity is designated 'posttransfer' editing and involves deacylation of mischarged Ala-tRNA(Pro). The misacylated Cys-tRNA(Pro) is not edited by ProRS. This Thermotoga maritima (strain ATCC 43589 / DSM 3109 / JCM 10099 / NBRC 100826 / MSB8) protein is Proline--tRNA ligase.